The following is a 339-amino-acid chain: Serine/threonine-protein kinase SAPK2 (339 aa).

One can recognise a Protein kinase domain in the interval 4 to 260; the sequence is YEVIKDIGSG…IPEIKNHPWF (257 aa). ATP is bound by residues 10-18 and Lys-33; that span reads IGSGNFGVA. The Proton acceptor role is filled by Asp-123. The C-terminal stretch occupies residues 253 to 339; that stretch reads EIKNHPWFLK…EDSGDFVCAL (87 aa).

Belongs to the protein kinase superfamily. Ser/Thr protein kinase family. Interacts with BZIP46. Interacts with ABI5 and PP2C30. Interacts with PP2C51. In terms of processing, phosphorylated. Expressed in leaf blades, leaf sheaths and roots. Expressed in shoots and roots of young seedlings.

It localises to the cytoplasm. It is found in the nucleus. The enzyme catalyses L-seryl-[protein] + ATP = O-phospho-L-seryl-[protein] + ADP + H(+). It catalyses the reaction L-threonyl-[protein] + ATP = O-phospho-L-threonyl-[protein] + ADP + H(+). With respect to regulation, activated by phosphorylation in response to hyperosmotic stress within 5 minutes. May play a role in signal transduction of hyperosmotic response. Can phosphorylate BZIP46 in vitro. Together with ABI5, PP2C30 and PYL5, is part of an abscisic acid (ABA) signaling unit that modulates seed germination and early seedling growth. This is Serine/threonine-protein kinase SAPK2 (SAPK2) from Oryza sativa subsp. japonica (Rice).